The following is a 710-amino-acid chain: Polyribonucleotide nucleotidyltransferase (710 aa).

Mg(2+)-binding residues include aspartate 487 and aspartate 493. One can recognise a KH domain in the interval 554–613 (PKIITMTINPDKIRDVIGPSGKQINKIIEETGVKIDIEQDGTVFISSIDQQMNEKAKKII). An S1 motif domain is found at 623–691 (GEIYLGKVKR…KQGRVNLSRK (69 aa)).

This sequence belongs to the polyribonucleotide nucleotidyltransferase family. Mg(2+) is required as a cofactor.

It localises to the cytoplasm. It carries out the reaction RNA(n+1) + phosphate = RNA(n) + a ribonucleoside 5'-diphosphate. Its function is as follows. Involved in mRNA degradation. Catalyzes the phosphorolysis of single-stranded polyribonucleotides processively in the 3'- to 5'-direction. This Bacillus cytotoxicus (strain DSM 22905 / CIP 110041 / 391-98 / NVH 391-98) protein is Polyribonucleotide nucleotidyltransferase.